The primary structure comprises 131 residues: D-ribose pyranase (131 aa).

Histidine 20 functions as the Proton donor in the catalytic mechanism. Residues aspartate 28, histidine 98, and 120–122 (YAN) contribute to the substrate site.

Belongs to the RbsD / FucU family. RbsD subfamily. Homodecamer.

Its subcellular location is the cytoplasm. It carries out the reaction beta-D-ribopyranose = beta-D-ribofuranose. It functions in the pathway carbohydrate metabolism; D-ribose degradation; D-ribose 5-phosphate from beta-D-ribopyranose: step 1/2. In terms of biological role, catalyzes the interconversion of beta-pyran and beta-furan forms of D-ribose. This Bacillus mycoides (strain KBAB4) (Bacillus weihenstephanensis) protein is D-ribose pyranase.